Here is a 111-residue protein sequence, read N- to C-terminus: Ribosome-binding factor A (111 aa).

Belongs to the RbfA family. As to quaternary structure, monomer. Binds 30S ribosomal subunits, but not 50S ribosomal subunits or 70S ribosomes.

It localises to the cytoplasm. One of several proteins that assist in the late maturation steps of the functional core of the 30S ribosomal subunit. Associates with free 30S ribosomal subunits (but not with 30S subunits that are part of 70S ribosomes or polysomes). Required for efficient processing of 16S rRNA. May interact with the 5'-terminal helix region of 16S rRNA. The sequence is that of Ribosome-binding factor A from Helicobacter acinonychis (strain Sheeba).